A 510-amino-acid chain; its full sequence is NAD(P)H-quinone oxidoreductase subunit 2 B, chloroplastic (510 aa).

Helical transmembrane passes span 24–44 (LLLF…GLIL), 57–77 (ISWF…VLLF), 99–119 (IFQF…VEYI), 124–144 (MAIT…MFLC), 149–169 (LITI…LSGY), 183–203 (YLLM…WLYG), 227–247 (PGIS…LSLA), 295–315 (WHLL…LIAI), 323–343 (MLAY…IVGD), 354–374 (YMLF…SFGL), 395–415 (ALSL…AGFF), 418–438 (LYLF…IGLL), and 482–502 (LSMI…NPII).

Belongs to the complex I subunit 2 family. In terms of assembly, NDH is composed of at least 16 different subunits, 5 of which are encoded in the nucleus.

The protein localises to the plastid. It localises to the chloroplast thylakoid membrane. It carries out the reaction a plastoquinone + NADH + (n+1) H(+)(in) = a plastoquinol + NAD(+) + n H(+)(out). The enzyme catalyses a plastoquinone + NADPH + (n+1) H(+)(in) = a plastoquinol + NADP(+) + n H(+)(out). In terms of biological role, NDH shuttles electrons from NAD(P)H:plastoquinone, via FMN and iron-sulfur (Fe-S) centers, to quinones in the photosynthetic chain and possibly in a chloroplast respiratory chain. The immediate electron acceptor for the enzyme in this species is believed to be plastoquinone. Couples the redox reaction to proton translocation, and thus conserves the redox energy in a proton gradient. This chain is NAD(P)H-quinone oxidoreductase subunit 2 B, chloroplastic, found in Lotus japonicus (Lotus corniculatus var. japonicus).